Here is a 320-residue protein sequence, read N- to C-terminus: MGTPFKMERGVKYRDAAKTSIIKVTNIDPDRELLQKPSWMKIKLPASSAKIDSIKNGMRRHGLHSVCEEASCPNLHECFNHGTATFMILGAICTRRCPFCDVAHGKPLPPDPEEPRKLAETIQDMKLKYVVITSVDRDDLPDRGAGHFADCVREIRALNPEIKIEILVPDFRGRIELALEKLKNNPPDVFNHNLENIPRLYREIRPGADYEWSLKLLREFKAMFPHIPTKSGLMVGLGENNEEILQVMRDLRTNGVTMLTLGQYLQPSRYHLPVARYVSPEEFDEFREKAAEMGFEHAACGPFVRSSYHADLQASGGLVK.

[4Fe-4S] cluster-binding residues include Cys67, Cys72, Cys78, Cys93, Cys97, Cys100, and Ser307. Residues 79 to 296 (FNHGTATFMI…REKAAEMGFE (218 aa)) form the Radical SAM core domain.

The protein belongs to the radical SAM superfamily. Lipoyl synthase family. Requires [4Fe-4S] cluster as cofactor.

It is found in the cytoplasm. The catalysed reaction is [[Fe-S] cluster scaffold protein carrying a second [4Fe-4S](2+) cluster] + N(6)-octanoyl-L-lysyl-[protein] + 2 oxidized [2Fe-2S]-[ferredoxin] + 2 S-adenosyl-L-methionine + 4 H(+) = [[Fe-S] cluster scaffold protein] + N(6)-[(R)-dihydrolipoyl]-L-lysyl-[protein] + 4 Fe(3+) + 2 hydrogen sulfide + 2 5'-deoxyadenosine + 2 L-methionine + 2 reduced [2Fe-2S]-[ferredoxin]. Its pathway is protein modification; protein lipoylation via endogenous pathway; protein N(6)-(lipoyl)lysine from octanoyl-[acyl-carrier-protein]: step 2/2. In terms of biological role, catalyzes the radical-mediated insertion of two sulfur atoms into the C-6 and C-8 positions of the octanoyl moiety bound to the lipoyl domains of lipoate-dependent enzymes, thereby converting the octanoylated domains into lipoylated derivatives. In Actinobacillus succinogenes (strain ATCC 55618 / DSM 22257 / CCUG 43843 / 130Z), this protein is Lipoyl synthase.